We begin with the raw amino-acid sequence, 71 residues long: MPSQQTETLNKMIEDISQKLNMLNVGVIRAEDFSDEKIEDLTYLHQMVMKKTSFSPSEMQAIAEELASLRK.

It belongs to the UPF0435 family.

This chain is UPF0435 protein RBAM_008100, found in Bacillus velezensis (strain DSM 23117 / BGSC 10A6 / LMG 26770 / FZB42) (Bacillus amyloliquefaciens subsp. plantarum).